Here is a 340-residue protein sequence, read N- to C-terminus: Protein-arginine kinase (340 aa).

Positions 21–242 constitute a Phosphagen kinase C-terminal domain; the sequence is VVLSSRIRLA…EQIIMQERVA (222 aa). ATP is bound by residues 24 to 28, histidine 79, arginine 113, 164 to 168, and 195 to 200; these read SSRIR, RASVM, and RGIYGE.

This sequence belongs to the ATP:guanido phosphotransferase family.

The enzyme catalyses L-arginyl-[protein] + ATP = N(omega)-phospho-L-arginyl-[protein] + ADP + H(+). Functionally, catalyzes the specific phosphorylation of arginine residues in proteins. The chain is Protein-arginine kinase from Listeria monocytogenes serovar 1/2a (strain ATCC BAA-679 / EGD-e).